Reading from the N-terminus, the 104-residue chain is Naphthalene 1,2-dioxygenase/salicylate 5-hydroxylase systems, ferredoxin component (104 aa).

A Rieske domain is found at 6-101; sequence IDAACLDDIP…VKIENMRVML (96 aa). Residues cysteine 45, histidine 47, cysteine 64, and histidine 67 each coordinate [2Fe-2S] cluster.

It belongs to the bacterial ring-hydroxylating dioxygenase ferredoxin component family. As to quaternary structure, ferredoxin NagAb belongs to both the salicylate 5-hydroxylase (S5H) and the naphthalene 1,2-dioxygenase (NDO) multicomponent enzyme systems. The NDO multicomponent enzyme system is composed of an electron transfer component and a dioxygenase component (iron sulfur protein (ISP)). The electron transfer component is composed of a ferredoxin reductase (NagAa) and a ferredoxin (NagAb), and the dioxygenase component is formed by a large alpha subunit (NagAc) and a small beta subunit (NagAd). The S5H multicomponent enzyme system is composed of an electron transfer component and a monooxygenase component. The electron transfer component is composed of a ferredoxin reductase (NagAa) and a ferredoxin (NagAb), and the monooxygenase component is formed by a large subunit (NagG) and a small subunit (NagH). [2Fe-2S] cluster is required as a cofactor.

It functions in the pathway aromatic compound metabolism; naphthalene degradation. Its function is as follows. Component of two multicomponent enzyme systems which are involved in the catabolism of naphthalene. Plays a role as an electron transfer component for both salicylate 5-hydroxylase (S5H) and naphthalene 1,2-dioxygenase (NDO) systems, by transferring electrons to the oxygenase components. The protein is Naphthalene 1,2-dioxygenase/salicylate 5-hydroxylase systems, ferredoxin component of Ralstonia sp.